A 378-amino-acid chain; its full sequence is F-box/kelch-repeat protein At4g29370 (378 aa).

One can recognise an F-box domain in the interval 23–69 (TSLFLQLPDEILVNCLARLSKSSYRSLSLVCKTFRSLLHSQPLYSAR). Kelch repeat units lie at residues 124 to 172 (GSKI…VLDD), 173 to 218 (KIYV…VRKI), 220 to 259 (VVGG…WSNS), and 260 to 305 (WCVI…NDNR).

This is F-box/kelch-repeat protein At4g29370 from Arabidopsis thaliana (Mouse-ear cress).